The following is a 293-amino-acid chain: Pantothenate synthetase (293 aa).

30–37 lines the ATP pocket; the sequence is MGYLHKGH. The active-site Proton donor is the histidine 37. A (R)-pantoate-binding site is contributed by glutamine 61. Glutamine 61 serves as a coordination point for beta-alanine. 147–150 lines the ATP pocket; it reads GEKD. Residue glutamine 153 coordinates (R)-pantoate. ATP-binding positions include valine 176 and 184–187; that span reads CSSR.

It belongs to the pantothenate synthetase family. As to quaternary structure, homodimer.

The protein localises to the cytoplasm. It carries out the reaction (R)-pantoate + beta-alanine + ATP = (R)-pantothenate + AMP + diphosphate + H(+). It participates in cofactor biosynthesis; (R)-pantothenate biosynthesis; (R)-pantothenate from (R)-pantoate and beta-alanine: step 1/1. In terms of biological role, catalyzes the condensation of pantoate with beta-alanine in an ATP-dependent reaction via a pantoyl-adenylate intermediate. The sequence is that of Pantothenate synthetase from Brucella melitensis biotype 2 (strain ATCC 23457).